The chain runs to 681 residues: Potassium-transporting ATPase ATP-binding subunit (681 aa).

4 helical membrane passes run 30–50 (LLVY…FFGI), 59–79 (LAIA…EAIA), 216–236 (ILLV…LPFT), and 255–275 (IALL…SIGI). The active-site 4-aspartylphosphate intermediate is aspartate 306. Residues aspartate 343, glutamate 347, 376-383 (FTATTRMS), and lysine 394 contribute to the ATP site. Mg(2+) is bound by residues aspartate 517 and aspartate 521. Helical transmembrane passes span 587-607 (FAII…LNLM), 615-635 (AILS…PLSL), and 661-681 (LIAP…LGIV).

This sequence belongs to the cation transport ATPase (P-type) (TC 3.A.3) family. Type IA subfamily. The system is composed of three essential subunits: KdpA, KdpB and KdpC.

The protein resides in the cell membrane. It catalyses the reaction K(+)(out) + ATP + H2O = K(+)(in) + ADP + phosphate + H(+). Its function is as follows. Part of the high-affinity ATP-driven potassium transport (or Kdp) system, which catalyzes the hydrolysis of ATP coupled with the electrogenic transport of potassium into the cytoplasm. This subunit is responsible for energy coupling to the transport system and for the release of the potassium ions to the cytoplasm. In Listeria monocytogenes serotype 4a (strain HCC23), this protein is Potassium-transporting ATPase ATP-binding subunit.